Consider the following 140-residue polypeptide: Large ribosomal subunit protein uL13 (140 aa).

Belongs to the universal ribosomal protein uL13 family. As to quaternary structure, part of the 50S ribosomal subunit.

In terms of biological role, this protein is one of the early assembly proteins of the 50S ribosomal subunit, although it is not seen to bind rRNA by itself. It is important during the early stages of 50S assembly. This Methanosarcina mazei (strain ATCC BAA-159 / DSM 3647 / Goe1 / Go1 / JCM 11833 / OCM 88) (Methanosarcina frisia) protein is Large ribosomal subunit protein uL13.